A 351-amino-acid chain; its full sequence is Anthranilate phosphoribosyltransferase (351 aa).

5-phospho-alpha-D-ribose 1-diphosphate contacts are provided by residues G80, 83-84 (GD), T88, 90-93 (NIST), 108-116 (KHGNRSITS), and S120. An anthranilate-binding site is contributed by G80. A Mg(2+)-binding site is contributed by S92. N111 provides a ligand contact to anthranilate. Residue R166 participates in anthranilate binding. Positions 229 and 230 each coordinate Mg(2+).

It belongs to the anthranilate phosphoribosyltransferase family. Homodimer. Mg(2+) serves as cofactor.

It carries out the reaction N-(5-phospho-beta-D-ribosyl)anthranilate + diphosphate = 5-phospho-alpha-D-ribose 1-diphosphate + anthranilate. Its pathway is amino-acid biosynthesis; L-tryptophan biosynthesis; L-tryptophan from chorismate: step 2/5. Catalyzes the transfer of the phosphoribosyl group of 5-phosphorylribose-1-pyrophosphate (PRPP) to anthranilate to yield N-(5'-phosphoribosyl)-anthranilate (PRA). The sequence is that of Anthranilate phosphoribosyltransferase from Chlorobaculum parvum (strain DSM 263 / NCIMB 8327) (Chlorobium vibrioforme subsp. thiosulfatophilum).